A 226-amino-acid polypeptide reads, in one-letter code: UPF0319 protein YpAngola_A3206 (226 aa).

Residues M1–A20 form the signal peptide.

It belongs to the UPF0319 family.

This Yersinia pestis bv. Antiqua (strain Angola) protein is UPF0319 protein YpAngola_A3206.